The following is a 112-amino-acid chain: UPF0060 membrane protein Arth_4238 (112 aa).

4 consecutive transmembrane segments (helical) span residues 7–27 (ILLF…VWQA), 33–53 (EWWW…AATL), 62–82 (ILAA…MVFD), and 88–108 (RWDI…MFAP).

This sequence belongs to the UPF0060 family.

Its subcellular location is the cell membrane. The protein is UPF0060 membrane protein Arth_4238 of Arthrobacter sp. (strain FB24).